The following is a 598-amino-acid chain: Major royal jelly protein 5 (598 aa).

A signal peptide spans 1-17 (MTTWLLLVVCLGIACQG). N-linked (GlcNAc...) asparagine glycans are attached at residues Asn-148, Asn-164, Asn-181, and Asn-324.

The protein belongs to the major royal jelly protein family. In terms of tissue distribution, found in and secreted from the hypopharyngeal glands of the worker honey bee (at protein level); expression peaks at 8 days post eclosion. Expressed in the brains of adult worker bees peaking at 12 days post eclosion (at protein level). Expressed in the spermatheca of adult queen bees (at protein level); Expression levels are higher in mated queens than in virgin queens. Expressed in the heads of worker bees after eclosion, expression dropping with age and detectable up to 26 days of age.

The protein resides in the secreted. Its function is as follows. Component of royal jelly, a substance produced in the hypopharyngeal gland containing proteins, free amino acids, fatty acids, sugars and other nutrients, which is fed to developing larvae by worker nurse bees. Major royal jelly proteins (MRJPs) are high in essential amino acids and probably have a nutritional function in larval food. All larvae are fed some royal jelly (also known as worker jelly) early in their development but it forms the principal source of nutrition for larvae destined to become queen bees. Produced in the spermatheca of adult queen bees, along with other major royal jelly proteins, where it may act as a nutrient supply for sperm stored by mated queens, or be involved in energy metabolism. The chain is Major royal jelly protein 5 from Apis mellifera (Honeybee).